A 415-amino-acid polypeptide reads, in one-letter code: Protein PIN-LIKES 4 (415 aa).

At 1–13 the chain is on the lumenal side; it reads MKLLELFIASSKP. Residues 14–34 traverse the membrane as a helical segment; the sequence is VVETLLITSVGFYLALDTVNL. Over 35–44 the chain is Cytoplasmic; sequence LGHDARKHLN. The helical transmembrane segment at 45 to 61 threads the bilayer; the sequence is NIVFYVFSPSLIGSRLA. The Lumenal segment spans residues 62-75; it reads DSVTYESLVKMWFM. The helical transmembrane segment at 76–96 threads the bilayer; it reads PVNVLLTFMIGSLLGWIVIVI. At 97–106 the chain is on the cytoplasmic side; it reads TKPPSQLRGL. A helical membrane pass occupies residues 107-127; it reads IISCCASGNLGTMPLIIIPAI. Topologically, residues 128 to 143 are lumenal; the sequence is CKEKGGPFGDSESCEK. Residues 144-161 traverse the membrane as a helical segment; the sequence is YGMGYVTLSMTAFFISVY. Residues 162 to 244 lie on the Cytoplasmic side of the membrane; sequence KHDTNWYVSG…RVVSLSKKVN (83 aa). Residues 245–265 traverse the membrane as a helical segment; it reads LGSIFAPATIAAIIALVIGLI. Residues 266 to 285 are Lumenal-facing; it reads TPLRNLIIGTVAPFRVIQDS. The helical transmembrane segment at 286-306 threads the bilayer; it reads LTLLGDGAIPAMTLILGGNLL. Residues 307–322 are Cytoplasmic-facing; that stretch reads KGMRRSEVRSSEMKNS. A helical membrane pass occupies residues 323–343; it reads CIIGVLVARYILLPVSGVLLV. Over 344–355 the chain is Lumenal; sequence RGAYKLDLVTSE. A helical transmembrane segment spans residues 356 to 376; the sequence is PLYQFVLLLQYAVPPAMNLGT. The Cytoplasmic segment spans residues 377-389; sequence KTQLFGAGESECS. The chain crosses the membrane as a helical span at residues 390 to 410; that stretch reads VIMLWTYSLAAVSLTVWPTFF. Topologically, residues 411 to 415 are lumenal; that stretch reads MWLVT.

This sequence belongs to the auxin efflux carrier (TC 2.A.69.2) family. In terms of tissue distribution, expressed in seedlings, rosette and cauline leaves, stems, flowers and siliques.

It localises to the endoplasmic reticulum membrane. Functionally, involved in cellular auxin homeostasis by regulating auxin metabolism. Regulates intracellular auxin accumulation at the endoplasmic reticulum and thus auxin availability for nuclear auxin signaling. The polypeptide is Protein PIN-LIKES 4 (Arabidopsis thaliana (Mouse-ear cress)).